The sequence spans 257 residues: NAD kinase (257 aa).

Asp44 functions as the Proton acceptor in the catalytic mechanism. NAD(+) is bound by residues 44–45, Arg49, 116–117, Asp146, Ala154, and 157–162; these read DG, NE, and TAYNLS.

This sequence belongs to the NAD kinase family. A divalent metal cation is required as a cofactor.

Its subcellular location is the cytoplasm. It catalyses the reaction NAD(+) + ATP = ADP + NADP(+) + H(+). Functionally, involved in the regulation of the intracellular balance of NAD and NADP, and is a key enzyme in the biosynthesis of NADP. Catalyzes specifically the phosphorylation on 2'-hydroxyl of the adenosine moiety of NAD to yield NADP. The polypeptide is NAD kinase (Rhizorhabdus wittichii (strain DSM 6014 / CCUG 31198 / JCM 15750 / NBRC 105917 / EY 4224 / RW1) (Sphingomonas wittichii)).